The chain runs to 173 residues: MEEMPLRESSPQRAERCKKSWLLCIVALLLMLLCSLGTLIYTSLKPTAIESCMVKFELSSSKWHMTSPKPHCVNTTSDGKLKILQSGTYLIYGQVIPVDKKYIKDNAPFVVQIYKKNDVLQTLMNDFQILPIGGVYELHAGDNIYLKFNSKDHIQKTNTYWGIILMPDLPFIS.

At 1–20 (MEEMPLRESSPQRAERCKKS) the chain is on the cytoplasmic side. Residues 21–41 (WLLCIVALLLMLLCSLGTLIY) traverse the membrane as a helical; Signal-anchor for type II membrane protein segment. Residues 40-166 (IYTSLKPTAI…TNTYWGIILM (127 aa)) enclose the THD domain. Topologically, residues 42-173 (TSLKPTAIES…ILMPDLPFIS (132 aa)) are extracellular. A disulfide bridge links Cys52 with Cys72. Asn74 carries N-linked (GlcNAc...) asparagine glycosylation.

This sequence belongs to the tumor necrosis factor family. In terms of assembly, homotrimer. Homodimer. N-glycosylated. As to expression, detected in immature and mature dendritic cells and in macrophages (at protein level). Detected in spleen, lung, heart, thymus, monocytes, macrophages, B-cells and dendritic cells.

Its subcellular location is the cell membrane. Cytokine that binds to TNFRSF18/AITR/GITR. Regulates T-cell responses. Can function as costimulator and lower the threshold for T-cell activation and T-cell proliferation. Important for interactions between activated T-lymphocytes and endothelial cells. Mediates activation of NF-kappa-B. Triggers increased phosphorylation of STAT1 and up-regulates expression of VCAM1 and ICAM1. Promotes leukocyte adhesion to endothelial cells. Regulates migration of monocytes from the splenic reservoir to sites of inflammation. The polypeptide is Tumor necrosis factor ligand superfamily member 18 (Tnfsf18) (Mus musculus (Mouse)).